Consider the following 433-residue polypeptide: Enolase (433 aa).

The tract at residues 37–59 (RAAVPSGASTGEHEAVELRDGDK) is disordered. A compositionally biased stretch (basic and acidic residues) spans 47 to 59 (GEHEAVELRDGDK). Residue glutamine 166 coordinates (2R)-2-phosphoglycerate. Glutamate 208 acts as the Proton donor in catalysis. Mg(2+) is bound by residues aspartate 245, glutamate 291, and aspartate 318. 4 residues coordinate (2R)-2-phosphoglycerate: lysine 343, arginine 372, serine 373, and lysine 394. Lysine 343 acts as the Proton acceptor in catalysis.

This sequence belongs to the enolase family. The cofactor is Mg(2+).

It is found in the cytoplasm. The protein resides in the secreted. Its subcellular location is the cell surface. The enzyme catalyses (2R)-2-phosphoglycerate = phosphoenolpyruvate + H2O. Its pathway is carbohydrate degradation; glycolysis; pyruvate from D-glyceraldehyde 3-phosphate: step 4/5. Its function is as follows. Catalyzes the reversible conversion of 2-phosphoglycerate (2-PG) into phosphoenolpyruvate (PEP). It is essential for the degradation of carbohydrates via glycolysis. The sequence is that of Enolase from Leptospira biflexa serovar Patoc (strain Patoc 1 / Ames).